The sequence spans 136 residues: Heme-binding protein Rv0203 (136 aa).

The signal sequence occupies residues 1–27 (MKTGTATTRRRLLAVLIALALPGAAVA). Cysteines 41 and 115 form a disulfide. The heme site is built by tyrosine 60, histidine 64, and histidine 90.

As to quaternary structure, dimer of dimers.

It is found in the secreted. Functionally, part of a heme-iron acquisition system. Acts by binding heme and delivering it to the membrane proteins MmpL3 and MmpL11. Can use free heme or heme from host hemoglobin. The sequence is that of Heme-binding protein Rv0203 from Mycobacterium tuberculosis (strain ATCC 25618 / H37Rv).